A 185-amino-acid polypeptide reads, in one-letter code: Lipopolysaccharide export system protein LptA (185 aa).

An N-terminal signal peptide occupies residues 1 to 27 (MKFKTNKLSLNLVLASSLLAASIPAFA). A disordered region spans residues 166-185 (PSQLQDKNNKGQTPAQKKGN).

The protein belongs to the LptA family. Component of the lipopolysaccharide transport and assembly complex.

The protein resides in the periplasm. Involved in the assembly of lipopolysaccharide (LPS). Required for the translocation of LPS from the inner membrane to the outer membrane. May form a bridge between the inner membrane and the outer membrane, via interactions with LptC and LptD, thereby facilitating LPS transfer across the periplasm. The protein is Lipopolysaccharide export system protein LptA of Escherichia coli O157:H7.